The chain runs to 339 residues: Mitogen-activated protein kinase kinase kinase 18 (339 aa).

The Protein kinase domain maps to 3–263 (WTRGKTLGRG…ASQLLNHPFL (261 aa)). ATP contacts are provided by residues 9-17 (LGRGSTATV) and K32. Residue D131 is the Proton acceptor of the active site. At S301 the chain carries Phosphoserine.

This sequence belongs to the protein kinase superfamily. Ser/Thr protein kinase family. In terms of assembly, interacts with ABI1. Binds to MKK3. Associates with SRK2E within the nucleus. Post-translationally, autophosphorylated. Unstable protein degraded by the proteasome pathway; this degradation is promoted by ABI1, but blocked by ABA. In terms of tissue distribution, expressed in roots, leaves and flowers.

It localises to the nucleus. It catalyses the reaction L-seryl-[protein] + ATP = O-phospho-L-seryl-[protein] + ADP + H(+). It carries out the reaction L-threonyl-[protein] + ATP = O-phospho-L-threonyl-[protein] + ADP + H(+). Kinase activity is activated by abscisic acid (ABA). Inhibited by ABI1. Activated by SRK2E. Functionally, component of the abscisic acid (ABA) signaling pathway that acts as ABA signal transducer in the context of abiotic stresses. Triggers MPK1, MPK2, MPK7 and MPK14 activation in a MKK3-dependent manner and MPK6 activation in a MKK3-independent manner. Mediates the ABA-dependent activation of the MKK3-MPK7 module. Positive regulator of ABA responses leading to the induction of gene expression (e.g. RD29B and RAB18) and involved in various responses including stomatal development, stomatal movement, inhibition of germination and root growth. Promotes leaf senescence. This chain is Mitogen-activated protein kinase kinase kinase 18, found in Arabidopsis thaliana (Mouse-ear cress).